The chain runs to 240 residues: 1-(5-phosphoribosyl)-5-[(5-phosphoribosylamino)methylideneamino] imidazole-4-carboxamide isomerase (240 aa).

The active-site Proton acceptor is the D8. D129 acts as the Proton donor in catalysis.

The protein belongs to the HisA/HisF family.

It localises to the cytoplasm. It carries out the reaction 1-(5-phospho-beta-D-ribosyl)-5-[(5-phospho-beta-D-ribosylamino)methylideneamino]imidazole-4-carboxamide = 5-[(5-phospho-1-deoxy-D-ribulos-1-ylimino)methylamino]-1-(5-phospho-beta-D-ribosyl)imidazole-4-carboxamide. The protein operates within amino-acid biosynthesis; L-histidine biosynthesis; L-histidine from 5-phospho-alpha-D-ribose 1-diphosphate: step 4/9. The chain is 1-(5-phosphoribosyl)-5-[(5-phosphoribosylamino)methylideneamino] imidazole-4-carboxamide isomerase from Clostridioides difficile (strain 630) (Peptoclostridium difficile).